Reading from the N-terminus, the 251-residue chain is Probable caffeoyl-CoA O-methyltransferase 3 (251 aa).

Residues Thr-61, Asp-83, 85–86 (GV), Ser-91, Asp-109, and Ala-138 each bind S-adenosyl-L-methionine. Asp-160 is an a divalent metal cation binding site. Residue Asp-162 coordinates S-adenosyl-L-methionine. 2 residues coordinate a divalent metal cation: Asp-186 and Asn-187.

Belongs to the class I-like SAM-binding methyltransferase superfamily. Cation-dependent O-methyltransferase family. CCoAMT subfamily.

The enzyme catalyses (E)-caffeoyl-CoA + S-adenosyl-L-methionine = (E)-feruloyl-CoA + S-adenosyl-L-homocysteine + H(+). The polypeptide is Probable caffeoyl-CoA O-methyltransferase 3 (omt1) (Dictyostelium discoideum (Social amoeba)).